The following is a 539-amino-acid chain: Cytochrome P450 monooxygenase buaD (539 aa).

A signal peptide spans 1 to 16 (MLVPVLTLLGTLTATG). N120 is a glycosylation site (N-linked (GlcNAc...) asparagine). C478 provides a ligand contact to heme. An N-linked (GlcNAc...) asparagine glycan is attached at N520.

It belongs to the cytochrome P450 family. Requires heme as cofactor.

It functions in the pathway mycotoxin biosynthesis. Cytochrome P450 monooxygenase; part of the gene cluster that mediates the biosynthesis of burnettramic acids, an unusual class of bolaamphiphilic pyrrolizidinediones that display potent antibacterial, antifungal, and cytotoxic activities. The first step of the biosynthesis of burnettramic acids is the hydroxylation of proline by the proline hydroxylase buaE to generate 4-hydroxyproline. The PKS-NRPS buaA and trans-enoyl reductase buaC construct the highly reduced polyketide chain, and the condensation (C) domain of buaA then catalyzes the amide bond formation with the activated 4-hydroxyproline. This is followed by the R domain releasing the nascent polyketide-peptide directly via a Dieckmann condensation to afford a tetramic acid fused to the hydroxyproline, generating the bicyclic pyrrolidinedione moiety. The cytochrome P450 monooxygenases buaD and buaG are likely responsible for the multiple hydroxylations on the polyketide chain and its terminus, although in the heterologous context, buaD does not appear to be required. Therefore, while buaG may be a multifunctional cytochrome P450 monooxygenase, it cannot be ruled out that the two secondary alcohols on the polyketide chain could have an acetate origin. Finally, the glycosyltransferase buaB transfers beta-D-mannose to the aglycone burnettramic acid A to form burnettramic acid A. Burnettramic acid B is a minor cis-pyrrolizidine epimer of burnettramic acid A and it is likely that small amounts of it form naturally in acidic environments. This Petromyces alliaceus (Aspergillus alliaceus) protein is Cytochrome P450 monooxygenase buaD.